The chain runs to 372 residues: Ciliary neurotrophic factor receptor subunit alpha (372 aa).

Positions 1–22 (MAAPVPWACCAVLAAAAAVVYA) are cleaved as a signal peptide. Residues 27–104 (PQEAPHVQYE…WHLRHQVLLH (78 aa)) form the Ig-like C2-type domain. A disulfide bridge links cysteine 46 with cysteine 89. N-linked (GlcNAc...) asparagine glycosylation is found at asparagine 60, asparagine 70, asparagine 142, and asparagine 190. Fibronectin type-III domains lie at 108-205 (PPRE…VKPD) and 206-306 (PPEN…TEEP). The WSXWS motif motif lies at 290–294 (WSDWS). Residues 301-340 (PWTEEPRHLTTEAQAPETTTSTTSSLAPPPTTKICDPGEL) are disordered. The span at 311–326 (TEAQAPETTTSTTSSL) shows a compositional bias: low complexity. Serine 342 is lipidated: GPI-anchor amidated serine. The propeptide at 343–372 (GGGPSAPFLIHVPVTLALAAAAATANSLLI) is removed in mature form.

Belongs to the type I cytokine receptor family. Type 3 subfamily. As to quaternary structure, forms a heterotrimer with LIFR and IL6ST. Interacts with heterodimeric neurotropic cytokine composed of CLCF1/CLC and CRLF1/CLF-1. Either alone or in complex with the heterodimer CLCF1-CRLF1 interacts with SORL1; this interaction may promote internalization and lysosomal degradation. In terms of tissue distribution, expressed in retina, brain, spleen, lung, liver and kidney. In the retina it is highly expressed by photoreceptors, but also found in the RPE, inner nuclear layer and ganglion cells.

Its subcellular location is the cell membrane. Functionally, binds to CNTF. The alpha subunit provides the receptor specificity. The polypeptide is Ciliary neurotrophic factor receptor subunit alpha (CNTFR) (Canis lupus familiaris (Dog)).